The sequence spans 151 residues: MSTAARRRLMRDFKRMQTDPPAGVSASPIPDNVMTWNAVIIGPADTPFEDGTFRLVMQFEEQYPNKPPQVKFISQMFHPNVYANGELCLDILQNRWSPTYDVAAVLTSIQSLLNDPNTGSPANVEASNLYKDNRREYIKRVRETVERSWED.

Residues 4-150 (AARRRLMRDF…VRETVERSWE (147 aa)) enclose the UBC core domain. C88 serves as the catalytic Glycyl thioester intermediate.

Belongs to the ubiquitin-conjugating enzyme family.

Its subcellular location is the cytoplasm. It is found in the nucleus. The enzyme catalyses S-ubiquitinyl-[E1 ubiquitin-activating enzyme]-L-cysteine + [E2 ubiquitin-conjugating enzyme]-L-cysteine = [E1 ubiquitin-activating enzyme]-L-cysteine + S-ubiquitinyl-[E2 ubiquitin-conjugating enzyme]-L-cysteine.. It participates in protein modification; protein ubiquitination. In terms of biological role, catalyzes the covalent attachment of ubiquitin to other proteins. Plays a role in transcription regulation by catalyzing the monoubiquitination of histone H2B to form H2BK123ub1. H2BK123ub1 gives a specific tag for epigenetic transcriptional activation and is also a prerequisite for H3K4me and H3K79me formation. Also involved in postreplication repair of UV-damaged DNA, in N-end rule-dependent protein degradation and in sporulation. In Trichoderma harzianum (Hypocrea lixii), this protein is Ubiquitin-conjugating enzyme E2 2 (UBC2).